The primary structure comprises 62 residues: Large ribosomal subunit protein bL28 (62 aa).

Belongs to the bacterial ribosomal protein bL28 family.

The chain is Large ribosomal subunit protein bL28 from Thermoanaerobacter pseudethanolicus (strain ATCC 33223 / 39E) (Clostridium thermohydrosulfuricum).